Consider the following 135-residue polypeptide: Holo-[acyl-carrier-protein] synthase (135 aa).

Residues Asp-8 and Glu-57 each coordinate Mg(2+).

It belongs to the P-Pant transferase superfamily. AcpS family. Mg(2+) is required as a cofactor.

It is found in the cytoplasm. The enzyme catalyses apo-[ACP] + CoA = holo-[ACP] + adenosine 3',5'-bisphosphate + H(+). In terms of biological role, transfers the 4'-phosphopantetheine moiety from coenzyme A to a Ser of acyl-carrier-protein. This chain is Holo-[acyl-carrier-protein] synthase, found in Methylobacterium sp. (strain 4-46).